The following is a 256-amino-acid chain: Protein FixA (256 aa).

Belongs to the ETF beta-subunit/FixA family. In terms of assembly, heterodimer of FixA and FixB.

The protein operates within amine and polyamine metabolism; carnitine metabolism. Its function is as follows. Required for anaerobic carnitine reduction. May bring reductant to CaiA. The chain is Protein FixA from Escherichia coli O6:H1 (strain CFT073 / ATCC 700928 / UPEC).